The sequence spans 98 residues: NADH-ubiquinone oxidoreductase chain 4L (98 aa).

Transmembrane regions (helical) follow at residues 1 to 21, 29 to 49, and 61 to 81; these read MPYI…GTLM, SLLC…LLSL, and LILL…LVMI.

The protein belongs to the complex I subunit 4L family. Core subunit of respiratory chain NADH dehydrogenase (Complex I) which is composed of 45 different subunits.

It is found in the mitochondrion inner membrane. It carries out the reaction a ubiquinone + NADH + 5 H(+)(in) = a ubiquinol + NAD(+) + 4 H(+)(out). Its function is as follows. Core subunit of the mitochondrial membrane respiratory chain NADH dehydrogenase (Complex I) which catalyzes electron transfer from NADH through the respiratory chain, using ubiquinone as an electron acceptor. Part of the enzyme membrane arm which is embedded in the lipid bilayer and involved in proton translocation. The chain is NADH-ubiquinone oxidoreductase chain 4L (MT-ND4L) from Loxodonta africana (African elephant).